A 583-amino-acid chain; its full sequence is 2-succinyl-5-enolpyruvyl-6-hydroxy-3-cyclohexene-1-carboxylate synthase (583 aa).

It belongs to the TPP enzyme family. MenD subfamily. As to quaternary structure, homodimer. The cofactor is Mg(2+). Mn(2+) serves as cofactor. Requires thiamine diphosphate as cofactor.

The catalysed reaction is isochorismate + 2-oxoglutarate + H(+) = 5-enolpyruvoyl-6-hydroxy-2-succinyl-cyclohex-3-ene-1-carboxylate + CO2. Its pathway is quinol/quinone metabolism; 1,4-dihydroxy-2-naphthoate biosynthesis; 1,4-dihydroxy-2-naphthoate from chorismate: step 2/7. It participates in quinol/quinone metabolism; menaquinone biosynthesis. Its function is as follows. Catalyzes the thiamine diphosphate-dependent decarboxylation of 2-oxoglutarate and the subsequent addition of the resulting succinic semialdehyde-thiamine pyrophosphate anion to isochorismate to yield 2-succinyl-5-enolpyruvyl-6-hydroxy-3-cyclohexene-1-carboxylate (SEPHCHC). The polypeptide is 2-succinyl-5-enolpyruvyl-6-hydroxy-3-cyclohexene-1-carboxylate synthase (Chlorobium luteolum (strain DSM 273 / BCRC 81028 / 2530) (Pelodictyon luteolum)).